The chain runs to 172 residues: Large ribosomal subunit protein uL10 (172 aa).

This sequence belongs to the universal ribosomal protein uL10 family. As to quaternary structure, part of the ribosomal stalk of the 50S ribosomal subunit. The N-terminus interacts with L11 and the large rRNA to form the base of the stalk. The C-terminus forms an elongated spine to which L12 dimers bind in a sequential fashion forming a multimeric L10(L12)X complex.

Its function is as follows. Forms part of the ribosomal stalk, playing a central role in the interaction of the ribosome with GTP-bound translation factors. This Chlorobium phaeovibrioides (strain DSM 265 / 1930) (Prosthecochloris vibrioformis (strain DSM 265)) protein is Large ribosomal subunit protein uL10.